The chain runs to 392 residues: Tryptophan synthase beta chain 1 (392 aa).

Lys-85 carries the N6-(pyridoxal phosphate)lysine modification.

It belongs to the TrpB family. Tetramer of two alpha and two beta chains. The cofactor is pyridoxal 5'-phosphate.

The catalysed reaction is (1S,2R)-1-C-(indol-3-yl)glycerol 3-phosphate + L-serine = D-glyceraldehyde 3-phosphate + L-tryptophan + H2O. It functions in the pathway amino-acid biosynthesis; L-tryptophan biosynthesis; L-tryptophan from chorismate: step 5/5. In terms of biological role, the beta subunit is responsible for the synthesis of L-tryptophan from indole and L-serine. In Methanothermobacter thermautotrophicus (strain ATCC 29096 / DSM 1053 / JCM 10044 / NBRC 100330 / Delta H) (Methanobacterium thermoautotrophicum), this protein is Tryptophan synthase beta chain 1 (trpB1).